Consider the following 614-residue polypeptide: DBH-like monooxygenase protein 1 (614 aa).

The N-terminal stretch at methionine 1–alanine 22 is a signal peptide. The Lumenal segment spans residues arginine 23 to serine 592. The 114-residue stretch at alanine 35–histidine 148 folds into the DOMON domain. Asparagine 114 carries an N-linked (GlcNAc...) asparagine glycan. Tyrosine 203 is a catalytic residue. 2 cysteine pairs are disulfide-bonded: cysteine 205–cysteine 257 and cysteine 242–cysteine 269. Cu cation-binding residues include histidine 235 and histidine 236. Residue asparagine 247 is glycosylated (N-linked (GlcNAc...) asparagine). Residues histidine 307, histidine 389, histidine 391, and methionine 464 each contribute to the Cu cation site. 3 disulfide bridges follow: cysteine 364/cysteine 480, cysteine 368/cysteine 550, and cysteine 443/cysteine 465. The active site involves histidine 389. 2 N-linked (GlcNAc...) asparagine glycosylation sites follow: asparagine 476 and asparagine 517. Residues leucine 593–valine 613 traverse the membrane as a helical segment.

It belongs to the copper type II ascorbate-dependent monooxygenase family. Cu(2+) is required as a cofactor.

It localises to the endoplasmic reticulum membrane. The sequence is that of DBH-like monooxygenase protein 1 (MOXD1) from Gallus gallus (Chicken).